Consider the following 598-residue polypeptide: Elongation factor 4 (598 aa).

One can recognise a tr-type G domain in the interval 2 to 184 (NNIRNFAIIA…AIVTKLPAPQ (183 aa)). GTP is bound by residues 14-19 (DHGKST) and 131-134 (NKVD).

It belongs to the TRAFAC class translation factor GTPase superfamily. Classic translation factor GTPase family. LepA subfamily.

The protein resides in the cell membrane. It carries out the reaction GTP + H2O = GDP + phosphate + H(+). In terms of biological role, required for accurate and efficient protein synthesis under certain stress conditions. May act as a fidelity factor of the translation reaction, by catalyzing a one-codon backward translocation of tRNAs on improperly translocated ribosomes. Back-translocation proceeds from a post-translocation (POST) complex to a pre-translocation (PRE) complex, thus giving elongation factor G a second chance to translocate the tRNAs correctly. Binds to ribosomes in a GTP-dependent manner. This chain is Elongation factor 4, found in Wolbachia pipientis subsp. Culex pipiens (strain wPip).